A 705-amino-acid polypeptide reads, in one-letter code: Glycine--tRNA ligase beta subunit (705 aa).

The protein belongs to the class-II aminoacyl-tRNA synthetase family. As to quaternary structure, tetramer of two alpha and two beta subunits.

The protein localises to the cytoplasm. The enzyme catalyses tRNA(Gly) + glycine + ATP = glycyl-tRNA(Gly) + AMP + diphosphate. This is Glycine--tRNA ligase beta subunit from Persephonella marina (strain DSM 14350 / EX-H1).